The following is a 130-amino-acid chain: ATP synthase epsilon chain (130 aa).

Belongs to the ATPase epsilon chain family. In terms of assembly, F-type ATPases have 2 components, CF(1) - the catalytic core - and CF(0) - the membrane proton channel. CF(1) has five subunits: alpha(3), beta(3), gamma(1), delta(1), epsilon(1). CF(0) has three main subunits: a, b and c.

Its subcellular location is the cell membrane. Its function is as follows. Produces ATP from ADP in the presence of a proton gradient across the membrane. This chain is ATP synthase epsilon chain (atpC), found in Mycoplasmoides gallisepticum (strain R(low / passage 15 / clone 2)) (Mycoplasma gallisepticum).